The primary structure comprises 255 residues: Hydroxyacylglutathione hydrolase (255 aa).

Residues His56, His58, Asp60, His61, His114, Asp133, and His171 each coordinate Zn(2+).

It belongs to the metallo-beta-lactamase superfamily. Glyoxalase II family. Monomer. Zn(2+) is required as a cofactor.

It catalyses the reaction an S-(2-hydroxyacyl)glutathione + H2O = a 2-hydroxy carboxylate + glutathione + H(+). It functions in the pathway secondary metabolite metabolism; methylglyoxal degradation; (R)-lactate from methylglyoxal: step 2/2. Functionally, thiolesterase that catalyzes the hydrolysis of S-D-lactoyl-glutathione to form glutathione and D-lactic acid. In Cereibacter sphaeroides (strain ATCC 17023 / DSM 158 / JCM 6121 / CCUG 31486 / LMG 2827 / NBRC 12203 / NCIMB 8253 / ATH 2.4.1.) (Rhodobacter sphaeroides), this protein is Hydroxyacylglutathione hydrolase.